A 254-amino-acid polypeptide reads, in one-letter code: Esterase YbfF (254 aa).

Residues Ser-89 and His-234 contribute to the active site.

The protein belongs to the DmpD/TodF/XylF esterase family.

In terms of biological role, displays esterase activity toward palmitoyl-CoA, malonyl-CoA and pNP-butyrate. The polypeptide is Esterase YbfF (ybfF) (Escherichia coli (strain K12)).